A 463-amino-acid polypeptide reads, in one-letter code: tRNA-2-methylthio-N(6)-dimethylallyladenosine synthase (463 aa).

In terms of domain architecture, MTTase N-terminal spans 19–135 (GSYWITTFGC…LESLLNQVDS (117 aa)). [4Fe-4S] cluster contacts are provided by cysteine 28, cysteine 64, cysteine 98, cysteine 170, cysteine 174, and cysteine 177. Positions 156–393 (RDSSICGWVN…NSLVENIAKE (238 aa)) constitute a Radical SAM core domain. Positions 396 to 463 (QRYKNTSQEI…RPFSLTAKLL (68 aa)) constitute a TRAM domain.

Belongs to the methylthiotransferase family. MiaB subfamily. As to quaternary structure, monomer. The cofactor is [4Fe-4S] cluster.

Its subcellular location is the cytoplasm. It catalyses the reaction N(6)-dimethylallyladenosine(37) in tRNA + (sulfur carrier)-SH + AH2 + 2 S-adenosyl-L-methionine = 2-methylsulfanyl-N(6)-dimethylallyladenosine(37) in tRNA + (sulfur carrier)-H + 5'-deoxyadenosine + L-methionine + A + S-adenosyl-L-homocysteine + 2 H(+). Its function is as follows. Catalyzes the methylthiolation of N6-(dimethylallyl)adenosine (i(6)A), leading to the formation of 2-methylthio-N6-(dimethylallyl)adenosine (ms(2)i(6)A) at position 37 in tRNAs that read codons beginning with uridine. This Prochlorococcus marinus (strain NATL2A) protein is tRNA-2-methylthio-N(6)-dimethylallyladenosine synthase.